A 102-amino-acid polypeptide reads, in one-letter code: NADH-quinone oxidoreductase subunit K (102 aa).

A run of 3 helical transmembrane segments spans residues 3–23 (IGLTHYLTVGAILFGLGAFGI), 31–51 (IVLLMAIELMLLAVNINLVAF), and 66–86 (FILTVAAAEAAIGLAILVVYF).

Belongs to the complex I subunit 4L family. In terms of assembly, NDH-1 is composed of 14 different subunits. Subunits NuoA, H, J, K, L, M, N constitute the membrane sector of the complex.

It is found in the cell inner membrane. It catalyses the reaction a quinone + NADH + 5 H(+)(in) = a quinol + NAD(+) + 4 H(+)(out). Functionally, NDH-1 shuttles electrons from NADH, via FMN and iron-sulfur (Fe-S) centers, to quinones in the respiratory chain. The immediate electron acceptor for the enzyme in this species is believed to be ubiquinone. Couples the redox reaction to proton translocation (for every two electrons transferred, four hydrogen ions are translocated across the cytoplasmic membrane), and thus conserves the redox energy in a proton gradient. This chain is NADH-quinone oxidoreductase subunit K, found in Rhodospirillum centenum (strain ATCC 51521 / SW).